The chain runs to 312 residues: DNA-directed RNA polymerase subunit alpha (312 aa).

An alpha N-terminal domain (alpha-NTD) region spans residues 1-226; it reads MIEFEKPNIT…EHFKVFESAD (226 aa). Residues 243 to 312 are alpha C-terminal domain (alpha-CTD); that stretch reads KEKKLEMTIE…DLGLSLRQED (70 aa).

The protein belongs to the RNA polymerase alpha chain family. Homodimer. The RNAP catalytic core consists of 2 alpha, 1 beta, 1 beta' and 1 omega subunit. When a sigma factor is associated with the core the holoenzyme is formed, which can initiate transcription.

The enzyme catalyses RNA(n) + a ribonucleoside 5'-triphosphate = RNA(n+1) + diphosphate. Its function is as follows. DNA-dependent RNA polymerase catalyzes the transcription of DNA into RNA using the four ribonucleoside triphosphates as substrates. In Lactobacillus acidophilus (strain ATCC 700396 / NCK56 / N2 / NCFM), this protein is DNA-directed RNA polymerase subunit alpha.